The primary structure comprises 1250 residues: TBC1 domain family member 9B (1250 aa).

GRAM domains follow at residues 142-209 and 288-356; these read LKMR…EKNA and ECYR…EKAD. At Thr-397 the chain carries Phosphothreonine. The interval 397–443 is disordered; sequence TPSKQPGSIGSRKASVVDPSTESSPAPQEGSEQPASPASPLSSRQSF. Phosphoserine occurs at positions 411, 432, 435, and 463. Positions 414–443 are enriched in polar residues; that stretch reads DPSTESSPAPQEGSEQPASPASPLSSRQSF. In terms of domain architecture, Rab-GAP TBC spans 508-695; the sequence is GIPESLRGEL…VIVDCFFYEG (188 aa). The helical transmembrane segment at 668–688 threads the bilayer; the sequence is LSWFLTLFLSVMPFESAVVIV. The EF-hand domain occupies 879-914; sequence HTPLLAGRMFRLLDENKDSLINFKEFVTGMSGMYHG. Disordered regions lie at residues 974-999, 1069-1093, and 1128-1157; these read LPQE…PDYR, SART…ELHQ, and VEGG…MSSY. Over residues 984–999 the composition is skewed to basic and acidic residues; it reads SEERGEEKGTSSPDYR. Phosphoserine is present on Ser-1241.

It is found in the membrane. In terms of biological role, may act as a GTPase-activating protein for Rab family protein(s). This chain is TBC1 domain family member 9B (TBC1D9B), found in Homo sapiens (Human).